A 464-amino-acid polypeptide reads, in one-letter code: Maturase K (464 aa).

Belongs to the intron maturase 2 family. MatK subfamily.

It is found in the plastid. Its subcellular location is the chloroplast. Functionally, usually encoded in the trnK tRNA gene intron. Probably assists in splicing its own and other chloroplast group II introns. The protein is Maturase K of Castanea crenata (Japanese chestnut).